An 884-amino-acid chain; its full sequence is Alanine--tRNA ligase (884 aa).

His565, His569, Cys672, and His676 together coordinate Zn(2+).

The protein belongs to the class-II aminoacyl-tRNA synthetase family. It depends on Zn(2+) as a cofactor.

It is found in the cytoplasm. It carries out the reaction tRNA(Ala) + L-alanine + ATP = L-alanyl-tRNA(Ala) + AMP + diphosphate. Functionally, catalyzes the attachment of alanine to tRNA(Ala) in a two-step reaction: alanine is first activated by ATP to form Ala-AMP and then transferred to the acceptor end of tRNA(Ala). Also edits incorrectly charged Ser-tRNA(Ala) and Gly-tRNA(Ala) via its editing domain. The chain is Alanine--tRNA ligase from Sphingopyxis alaskensis (strain DSM 13593 / LMG 18877 / RB2256) (Sphingomonas alaskensis).